The chain runs to 226 residues: MTVEQKIIFFDLDNCLYPKSYKIHNMMAARITAFFSDKLGIPTEEAERLREVYYRHYGIAIRGLVLHHEIDAVDYDQRVDQSLPLEKVIKKDEVLREMLLELRKKYKCWIFTNAYIVHANRVLKYLGIEDCFDGITYCDYNAKDLIAKPMPEMYERVMREAGVTDKDKCIFVDDSYGNILGAREFGWKYTVQLVEHGDPLPQPQAGSHVIRDIHKFKHLLDEIDGE.

It belongs to the SSM1 family.

This is an uncharacterized protein from Schizosaccharomyces pombe (strain 972 / ATCC 24843) (Fission yeast).